Consider the following 257-residue polypeptide: tRNA-cytidine(32) 2-sulfurtransferase (257 aa).

Residues 37 to 42 carry the PP-loop motif motif; sequence SGGKDS. 3 residues coordinate [4Fe-4S] cluster: Cys112, Cys115, and Cys202.

The protein belongs to the TtcA family. Homodimer. Mg(2+) serves as cofactor. It depends on [4Fe-4S] cluster as a cofactor.

It is found in the cytoplasm. It carries out the reaction cytidine(32) in tRNA + S-sulfanyl-L-cysteinyl-[cysteine desulfurase] + AH2 + ATP = 2-thiocytidine(32) in tRNA + L-cysteinyl-[cysteine desulfurase] + A + AMP + diphosphate + H(+). Its pathway is tRNA modification. In terms of biological role, catalyzes the ATP-dependent 2-thiolation of cytidine in position 32 of tRNA, to form 2-thiocytidine (s(2)C32). The sulfur atoms are provided by the cysteine/cysteine desulfurase (IscS) system. This chain is tRNA-cytidine(32) 2-sulfurtransferase, found in Geobacter sulfurreducens (strain ATCC 51573 / DSM 12127 / PCA).